The following is an 810-amino-acid chain: Cation/H(+) antiporter 18 (810 aa).

The next 12 membrane-spanning stretches (helical) occupy residues 29–49 (FALPLAILQIVIVIVLTRVLA), 59–76 (RVIAEVIGGIMLGPSLLG), 91–111 (LTVLETLANLGLLFFLFLAGL), 126–146 (LGIALAGITLPFALGIGSSFV), 157–177 (STAFLVFMGVALSITAFPVLA), 193–213 (LAMSAAAVNDVAAWILLALAI), 223–243 (LVSLWVFLSGCAFVIGASFII), 277–297 (FITDAIGIHSMFGAFVVGVLI), 314–334 (LVSGLFLPLYFVASGLKTNVA), 343–363 (GLLVLVTATACFGKILGTLGV), 374–394 (AITLGFLMNTKGLVELIVLNI), and 406–426 (FAIMVLMALFTTFITTPVVMA). A Phosphoserine modification is found at serine 804.

The protein belongs to the monovalent cation:proton antiporter 2 (CPA2) transporter (TC 2.A.37) family. CHX (TC 2.A.37.4) subfamily. Expressed in roots.

Its subcellular location is the membrane. Its function is as follows. May operate as a cation/H(+) antiporter. In Arabidopsis thaliana (Mouse-ear cress), this protein is Cation/H(+) antiporter 18 (CHX18).